The chain runs to 425 residues: Lipoyl synthase, mitochondrial (425 aa).

Residues 1-33 (MAASSTRLRCLYASSSTWKTSPSQSLISLSRRY) constitute a mitochondrion transit peptide. A disordered region spans residues 17 to 55 (TWKTSPSQSLISLSRRYATTSSAPPTPSDESSSTLPKRR). A compositionally biased stretch (polar residues) spans 33-51 (YATTSSAPPTPSDESSSTL). 7 residues coordinate [4Fe-4S] cluster: cysteine 142, cysteine 147, cysteine 153, cysteine 173, cysteine 177, cysteine 180, and serine 388. Residues 156–377 (GSDKSAATAT…RQRALEMGFL (222 aa)) enclose the Radical SAM core domain.

This sequence belongs to the radical SAM superfamily. Lipoyl synthase family. It depends on [4Fe-4S] cluster as a cofactor.

It is found in the mitochondrion. It carries out the reaction [[Fe-S] cluster scaffold protein carrying a second [4Fe-4S](2+) cluster] + N(6)-octanoyl-L-lysyl-[protein] + 2 oxidized [2Fe-2S]-[ferredoxin] + 2 S-adenosyl-L-methionine + 4 H(+) = [[Fe-S] cluster scaffold protein] + N(6)-[(R)-dihydrolipoyl]-L-lysyl-[protein] + 4 Fe(3+) + 2 hydrogen sulfide + 2 5'-deoxyadenosine + 2 L-methionine + 2 reduced [2Fe-2S]-[ferredoxin]. It functions in the pathway protein modification; protein lipoylation via endogenous pathway; protein N(6)-(lipoyl)lysine from octanoyl-[acyl-carrier-protein]: step 2/2. In terms of biological role, catalyzes the radical-mediated insertion of two sulfur atoms into the C-6 and C-8 positions of the octanoyl moiety bound to the lipoyl domains of lipoate-dependent enzymes, thereby converting the octanoylated domains into lipoylated derivatives. This is Lipoyl synthase, mitochondrial from Talaromyces marneffei (strain ATCC 18224 / CBS 334.59 / QM 7333) (Penicillium marneffei).